A 263-amino-acid polypeptide reads, in one-letter code: Endonuclease 8 (263 aa).

Catalysis depends on proline 2, which acts as the Schiff-base intermediate with DNA. The active-site Proton donor is glutamate 3. Lysine 53 (proton donor; for beta-elimination activity) is an active-site residue. The DNA site is built by glutamine 70, arginine 125, and asparagine 169. The FPG-type zinc finger occupies 229–263; the sequence is KVFHRDGERCERCGGVIEKTTLSSRPFYWCPGCQH. The Proton donor; for delta-elimination activity role is filled by arginine 253.

The protein belongs to the FPG family. Zn(2+) is required as a cofactor.

It carries out the reaction 2'-deoxyribonucleotide-(2'-deoxyribose 5'-phosphate)-2'-deoxyribonucleotide-DNA = a 3'-end 2'-deoxyribonucleotide-(2,3-dehydro-2,3-deoxyribose 5'-phosphate)-DNA + a 5'-end 5'-phospho-2'-deoxyribonucleoside-DNA + H(+). Involved in base excision repair of DNA damaged by oxidation or by mutagenic agents. Acts as a DNA glycosylase that recognizes and removes damaged bases. Has a preference for oxidized pyrimidines, such as thymine glycol, 5,6-dihydrouracil and 5,6-dihydrothymine. Has AP (apurinic/apyrimidinic) lyase activity and introduces nicks in the DNA strand. Cleaves the DNA backbone by beta-delta elimination to generate a single-strand break at the site of the removed base with both 3'- and 5'-phosphates. This Klebsiella pneumoniae (strain 342) protein is Endonuclease 8.